The primary structure comprises 183 residues: MKKKTTLSEEDQALFRQLMAGTRKIKQDTIVHRPQRKKISEVPVKRLIPEQADASHYFSDEFQPLLNTEGPVKYVRPDVSHFEAKKLRRGDYSPELFLDLHGLTQLQAKQELGALIAACRREHVFCACVMHGHGKHILKQQTPLWLAQHPHVMAFHQAPKEYGGDAALLVLIEVEEWLPPELP.

In terms of domain architecture, Smr spans 98-173; sequence LDLHGLTQLQ…GDAALLVLIE (76 aa).

The protein belongs to the SmrB family. As to quaternary structure, associates with collided ribosomes, but not with correctly translating polysomes.

In terms of biological role, acts as a ribosome collision sensor. Detects stalled/collided disomes (pairs of ribosomes where the leading ribosome is stalled and a second ribosome has collided with it) and endonucleolytically cleaves mRNA at the 5' boundary of the stalled ribosome. Stalled/collided disomes form a new interface (primarily via the 30S subunits) that binds SmrB. Cleaved mRNA becomes available for tmRNA ligation, leading to ribosomal subunit dissociation and rescue of stalled ribosomes. This Shigella sonnei (strain Ss046) protein is Ribosome rescue factor SmrB.